Consider the following 208-residue polypeptide: Sec-independent protein translocase protein TatB (208 aa).

The chain crosses the membrane as a helical span at residues 1 to 21 (MFDIGVGELTLIAVVALVVLG). The segment covering 178 to 189 (APEPVAVAPVDA) has biased composition (low complexity). Residues 178-208 (APEPVAVAPVDAGTPAAWTPSAPAKLQEKQP) form a disordered region.

The protein belongs to the TatB family. As to quaternary structure, the Tat system comprises two distinct complexes: a TatABC complex, containing multiple copies of TatA, TatB and TatC subunits, and a separate TatA complex, containing only TatA subunits. Substrates initially bind to the TatABC complex, which probably triggers association of the separate TatA complex to form the active translocon.

The protein resides in the cell inner membrane. Functionally, part of the twin-arginine translocation (Tat) system that transports large folded proteins containing a characteristic twin-arginine motif in their signal peptide across membranes. Together with TatC, TatB is part of a receptor directly interacting with Tat signal peptides. TatB may form an oligomeric binding site that transiently accommodates folded Tat precursor proteins before their translocation. The polypeptide is Sec-independent protein translocase protein TatB (Xanthomonas euvesicatoria pv. vesicatoria (strain 85-10) (Xanthomonas campestris pv. vesicatoria)).